The following is a 297-amino-acid chain: Homoserine kinase (297 aa).

79–89 serves as a coordination point for ATP; it reads PIARGLGSSGA.

This sequence belongs to the GHMP kinase family. Homoserine kinase subfamily.

The protein localises to the cytoplasm. It catalyses the reaction L-homoserine + ATP = O-phospho-L-homoserine + ADP + H(+). The protein operates within amino-acid biosynthesis; L-threonine biosynthesis; L-threonine from L-aspartate: step 4/5. Functionally, catalyzes the ATP-dependent phosphorylation of L-homoserine to L-homoserine phosphate. The protein is Homoserine kinase of Pyrobaculum aerophilum (strain ATCC 51768 / DSM 7523 / JCM 9630 / CIP 104966 / NBRC 100827 / IM2).